The chain runs to 185 residues: Regulator of rDNA transcription protein 13 (185 aa).

3 WD repeats span residues 9–48 (GHTDRIYSTIYDHERKRCISASMDTTIRIWDLENIRNNGE), 71–108 (GHRALVGLLGLSDKFLVSASVDGSIRCWDANTYFLKHF), and 111–148 (HTQLNTITALHVSDEVLVSGSEGLLNIYDLNSGLLVRS).

Its function is as follows. May be involved in the modulation of rDNA transcription. This is Regulator of rDNA transcription protein 13 (RRT13) from Saccharomyces cerevisiae (strain ATCC 204508 / S288c) (Baker's yeast).